A 259-amino-acid polypeptide reads, in one-letter code: Bidirectional sugar transporter SWEET4 (259 aa).

Residues 1 to 10 (MVSPDTIRTA) lie on the Extracellular side of the membrane. Residues 10 to 94 (AIGVVGNGTA…TYIALFLAFS (85 aa)) enclose the MtN3/slv 1 domain. The chain crosses the membrane as a helical span at residues 11-31 (IGVVGNGTALVLFLSPVPTFI). Over 32–44 (RIWKKGSVEQYSA) the chain is Cytoplasmic. The helical transmembrane segment at 45-65 (VPYVATLLNCMMWVLYGLPAV) threads the bilayer. At 66 to 77 (HPHSMLVITING) the chain is on the extracellular side. Residue asparagine 76 is glycosylated (N-linked (GlcNAc...) asparagine). A helical transmembrane segment spans residues 78–98 (TGMAIELTYIALFLAFSLGAV). Topologically, residues 99-101 (RRR) are cytoplasmic. Residues 102–122 (VLLLLAAEVAFVAAVAALVLN) traverse the membrane as a helical segment. The Extracellular segment spans residues 123 to 131 (LAHTHERRS). A helical transmembrane segment spans residues 132–152 (MIVGILCVLFGTGMYAAPLSV). One can recognise a MtN3/slv 2 domain in the interval 133–217 (IVGILCVLFG…ILYAIYYKST (85 aa)). The Cytoplasmic portion of the chain corresponds to 153 to 165 (MKMVIQTKSVEYM). A helical transmembrane segment spans residues 166-186 (PLFLSLASLVNGICWTAYALI). At 187–191 (RFDLY) the chain is on the extracellular side. A helical transmembrane segment spans residues 192 to 212 (ITIPNGLGVMFAVAQLILYAI). The Cytoplasmic segment spans residues 213–259 (YYKSTQQIIEARKRKEADHVAMTDVVVDSAKNNPSSGAAAAAANGRY).

The protein belongs to the SWEET sugar transporter family. In terms of assembly, forms homooligomers and/or heterooligomers.

The protein resides in the cell membrane. Its function is as follows. Mediates both low-affinity uptake and efflux of sugar across the plasma membrane. This Oryza sativa subsp. indica (Rice) protein is Bidirectional sugar transporter SWEET4 (SWEET4).